The primary structure comprises 70 residues: Small ribosomal subunit protein bS21 (70 aa).

It belongs to the bacterial ribosomal protein bS21 family.

The polypeptide is Small ribosomal subunit protein bS21 (Helicobacter pylori (strain P12)).